Reading from the N-terminus, the 116-residue chain is UPF0102 protein LBJ_1427 (116 aa).

Belongs to the UPF0102 family.

This chain is UPF0102 protein LBJ_1427, found in Leptospira borgpetersenii serovar Hardjo-bovis (strain JB197).